The following is a 173-amino-acid chain: Atrial gland and califin peptides (173 aa).

The signal sequence occupies residues 1–21 (MKANTMFIILCLSLSTLCVSS). Residues 22–34 (QSTSVHGKIFVPN) constitute a propeptide that is removed on maturation. Ile-69 is modified (isoleucine amide). Residues 73 to 114 (AAGEMEQSEGQNPETKSHSWRKRSVLTPSLSSLGESLESGIS) constitute a propeptide that is removed on maturation. Residues 75–94 (GEMEQSEGQNPETKSHSWRK) form a disordered region. Cys-141 and Cys-172 are joined by a disulfide. Position 152 is a leucine amide (Leu-152).

Belongs to the molluscan ELH family. As to quaternary structure, califin A consists of a 36-residue large subunit bound by a single disulfide bond to a 18-residue small subunit.

It is found in the secreted. Functionally, the atrial gland peptide A and peptide B precursors are the source of the 2 peptides that, upon release from this reproductive system gland, initiate the egg-laying process by exciting the bag cell neurons. These neurons, clustered in neural connectives near the abdominal ganglion, in turn release other peptides that act directly on the ganglion and also, via the circulating hemolymph, on many other organs to control the physiological processes of egg-laying. One of these other peptides is the egg-laying hormone. Injected in sexually mature animals califin A excites LB and LC cells of the abdominal ganglion and causes egg-laying. This Aplysia californica (California sea hare) protein is Atrial gland and califin peptides.